The following is a 311-amino-acid chain: Retron Ec78 reverse transcriptase (311 aa).

One can recognise a Reverse transcriptase domain in the interval 15–241; the sequence is DSGISAFLVT…HNRHVTGVTI (227 aa). Residues D96, D187, and D188 each contribute to the Mg(2+) site.

The protein belongs to the bacterial reverse transcriptase family.

It carries out the reaction DNA(n) + a 2'-deoxyribonucleoside 5'-triphosphate = DNA(n+1) + diphosphate. Functionally, reverse transcriptase (RT) component of antiviral defense system retron Ec78, composed of a non-coding RNA (ncRNA), this reverse transcriptase (RT), a probable ATPase and a putative HNH endonuclease. Expression of retron Ec78 confers protection against bacteriophage T5. At multiplicity of infection (MOI) of 0.02 cultures slow growth when infected with T5 but do not collapse, at MOI 2 cultures enter growth stasis. Responsible for synthesis of msDNA-Ec78 (a linear ssDNA with a 5'-terminal phosphate residue). Unlike most known msDNAs the mature product does not have an RNA component. The retron transcript serves as primer and template for the reaction, and codes for the RT. Not mutagenic when cloned in E.coli. It is thought to be synthesized as a branched RNA with a 2',5'-phosphodiester linkage to ssDNA; the linkage is cleaved endonucleolytically by ExoVII (xseA-xseB) leaving the observed mature 5'-ssDNA terminus. Overexpression of the ncRNA and RT, which leads to increased levels of msDNA, is not mutagenic in vivo. As the stem in the msDNA does not have a mismatch it probably does not bind or sequester MutS and/or MutL. The sequence is that of Retron Ec78 reverse transcriptase from Escherichia coli.